The primary structure comprises 266 residues: Putative carbamate hydrolase RutD (266 aa).

The AB hydrolase-1 domain maps to 14 to 116 (PVVVLISGLG…VLVSVNGWLR (103 aa)).

The protein belongs to the AB hydrolase superfamily. Hydrolase RutD family.

The enzyme catalyses carbamate + 2 H(+) = NH4(+) + CO2. In terms of biological role, involved in pyrimidine catabolism. May facilitate the hydrolysis of carbamate, a reaction that can also occur spontaneously. The protein is Putative carbamate hydrolase RutD of Escherichia coli O81 (strain ED1a).